A 71-amino-acid polypeptide reads, in one-letter code: Permeability factor 2 (71 aa).

Cystine bridges form between C7/C33 and C9/C49.

It belongs to the intercrine alpha (chemokine CxC) family. In terms of assembly, homodimer.

It localises to the secreted. Its function is as follows. Has chemotactic activity for neutrophils. The protein is Permeability factor 2 of Oryctolagus cuniculus (Rabbit).